Reading from the N-terminus, the 387-residue chain is uncharacterized protein (387 aa).

Positions 1-23 (MSSLPRNAVARNSKMHKKRDSGV) are disordered. A coiled-coil region spans residues 98 to 129 (KIARDLKKRQEDYEKTKLEVERLKRSEELANK). Residues 146 to 255 (ENNTVEPNNE…NKKKKKEKNK (110 aa)) form a disordered region. Low complexity-rich tracts occupy residues 162 to 175 (EQITEQTVEQTTEQ) and 182 to 194 (EQTTEKTTQQTAE). The segment covering 204–213 (TVEKSGDQST) has biased composition (basic and acidic residues). Polar residues predominate over residues 214-231 (EKTTQQTAEESVEQSTEQ).

This is an uncharacterized protein from Acanthamoeba polyphaga mimivirus (APMV).